A 156-amino-acid chain; its full sequence is MPRKGYTKRQEVLPDPIYNSKLVSRLINKLMLDGKRGTASTILYDAFDRIKEATGNEPLEVFEQAMENIMPVLEVKARRVGGSNYQVPIEVRPDRRTTLGLRWLVNYSRLRNEHTMDERLAKEIMDAANDTGASVKKREDTHKMAEANRAFAHYRW.

Belongs to the universal ribosomal protein uS7 family. Part of the 30S ribosomal subunit. Contacts proteins S9 and S11.

Functionally, one of the primary rRNA binding proteins, it binds directly to 16S rRNA where it nucleates assembly of the head domain of the 30S subunit. Is located at the subunit interface close to the decoding center, probably blocks exit of the E-site tRNA. This Leuconostoc citreum (strain KM20) protein is Small ribosomal subunit protein uS7.